A 180-amino-acid chain; its full sequence is Large ribosomal subunit protein uL6 (180 aa).

Belongs to the universal ribosomal protein uL6 family. As to quaternary structure, part of the 50S ribosomal subunit.

Functionally, this protein binds to the 23S rRNA, and is important in its secondary structure. It is located near the subunit interface in the base of the L7/L12 stalk, and near the tRNA binding site of the peptidyltransferase center. This Clostridium botulinum (strain 657 / Type Ba4) protein is Large ribosomal subunit protein uL6.